The sequence spans 107 residues: Diuretic hormone 45 (107 aa).

The propeptide occupies 1–44; the sequence is LYAMSPMAARYSAGAPWLYLLADMPRDSQRLVDPADLHEGRARP. At Val91 the chain carries Valine amide.

Expressed in corpora cardiaca (CC), corpora allata (CA), antennal lobe (AL) and gnathal ganglion (GNG) (at protein level). Expression in AL and GNG detected in some animals, in CC and CA in few animals (at protein level).

Its subcellular location is the secreted. Functionally, regulation of fluid secretion. The polypeptide is Diuretic hormone 45 (Agrotis ipsilon (Black cutworm moth)).